The primary structure comprises 336 residues: Atypical chemokine receptor 1 (336 aa).

The Extracellular segment spans residues 1–63; the sequence is MGNCLHQAEL…CNLLDDSSLP (63 aa). N-linked (GlcNAc...) asparagine glycosylation is found at Asn16, Asn27, and Asn33. Intrachain disulfides connect Cys51–Cys276 and Cys129–Cys195. A helical membrane pass occupies residues 64–84; that stretch reads FFILASVLGILASSTVLFLLF. Topologically, residues 85–95 are cytoplasmic; the sequence is RPLFRWQLCPG. Residues 96 to 116 traverse the membrane as a helical segment; that stretch reads WPVLAQLAVGSTLFSIVVPIL. The Extracellular segment spans residues 117 to 129; sequence APGLGNTRSSAPC. Residues 130 to 153 form a helical membrane-spanning segment; the sequence is SLGYCVWYGSAFAQALLLGCHASL. At 154 to 166 the chain is on the cytoplasmic side; the sequence is GPKLGAGQVPGLT. The chain crosses the membrane as a helical span at residues 167-187; the sequence is LGLSVGLWGAAALLTLPITLA. The Extracellular portion of the chain corresponds to 188 to 207; that stretch reads SDASDGLCTPIYSTELKALQ. A helical membrane pass occupies residues 208-228; the sequence is ATHTVACFAIFVLLPLGLFGA. At 229 to 244 the chain is on the cytoplasmic side; sequence KGLKKVLGMGPGPWMN. Residues 245-265 traverse the membrane as a helical segment; the sequence is ILWVWFIFWWPHGVVLGLDFL. The Extracellular segment spans residues 266 to 287; sequence VRSKLLLLPTCLAQQVLDLLLN. A helical membrane pass occupies residues 288–308; the sequence is LAEALAIVHCVATPLLLALFC. Residues 309–336 are Cytoplasmic-facing; it reads HQATRTLVPSLPLPERWSSPVDTLGSKS.

This sequence belongs to the G-protein coupled receptor 1 family. Atypical chemokine receptor subfamily.

It is found in the early endosome. Its subcellular location is the recycling endosome. The protein localises to the membrane. In terms of biological role, atypical chemokine receptor that controls chemokine levels and localization via high-affinity chemokine binding that is uncoupled from classic ligand-driven signal transduction cascades, resulting instead in chemokine sequestration, degradation, or transcytosis. Also known as interceptor (internalizing receptor) or chemokine-scavenging receptor or chemokine decoy receptor. Has a promiscuous chemokine-binding profile, interacting with inflammatory chemokines of both the CXC and the CC subfamilies but not with homeostatic chemokines. Acts as a receptor for chemokines including CCL2, CCL5, CCL7, CCL11, CCL13, CCL14, CCL17, CXCL5, CXCL6, IL8/CXCL8, CXCL11, GRO, RANTES, MCP-1 and TARC. May regulate chemokine bioavailability and, consequently, leukocyte recruitment through two distinct mechanisms: when expressed in endothelial cells, it sustains the abluminal to luminal transcytosis of tissue-derived chemokines and their subsequent presentation to circulating leukocytes; when expressed in erythrocytes, serves as blood reservoir of cognate chemokines but also as a chemokine sink, buffering potential surges in plasma chemokine levels. The sequence is that of Atypical chemokine receptor 1 (ACKR1) from Saguinus imperator (Emperor tamarin).